A 4834-amino-acid chain; its full sequence is MPSESFCLAAQARLDSKWLKTDIQLAFTRDGLCGLWNEMVKDGEIVYTGTESTQNGELPPRKDDSVEPSGTKKEDLNDKEKKDEEETPAPIYRAKSILDSWVWGKQPDVNELKECLSVLVKEQQALAVQSATTTLSALRLKQRLVILERYFIALNRTVFQENVKVKWKSSGISLPPVDKKSSRPAGKGVEGLARVGSRAALSFAFAFLRRAWRSGEDADLCSELLQESLDALRALPEASLFDESTVSSVWLEVVERATRFLRSVVTGDVHGTPATKGPGSIPLQDQHLALAILLELAVQRGTLSQMLSAILLLLQLWDSGAQETDNERSAQGTSAPLLPLLQRFQSIICRKDAPHSEGDMHLLSGPLSPNESFLRYLTLPQDNELAIDLRQTAVVVMAHLDRLATPCMPPLCSSPTSHKGSLQEVIGWGLIGWKYYANVIGPIQCEGLANLGVTQIACAEKRFLILSRNGRVYTQAYNSDTLAPQLVQGLASRNIVKIAAHSDGHHYLALAATGEVYSWGCGDGGRLGHGDTVPLEEPKVISAFSGKQAGKHVVHIACGSTYSAAITAEGELYTWGRGNYGRLGHGSSEDEAIPMLVAGLKGLKVIDVACGSGDAQTLAVTENGQVWSWGDGDYGKLGRGGSDGCKTPKLIEKLQDLDVVKVRCGSQFSIALTKDGQVYSWGKGDNQRLGHGTEEHVRYPKLLEGLQGKKVIDVAAGSTHCLALTEDSEVHSWGSNDQCQHFDTLRVTKPEPAALPGLDTKHIVGIACGPAQSFAWSSCSEWSIGLRVPFVVDICSMTFEQLDLLLRQVSEGMDGSADWPPPQEKECVAVATLNLLRLQLHAAISHQVDPEFLGLGLGSILLNSLKQTVVTLASSAGVLSTVQSAAQAVLQSGWSVLLPTAEERARALSALLPCAVSGNEVNISPGRRFMIDLLVGSLMADGGLESALHAAITAEIQDIEAKKEAQKEKEIDEQEANASTFHRSRTPLDKDLINTGICESSGKQCLPLVQLIQQLLRNIASQTVARLKDVARRISSCLDFEQHSRERSASLDLLLRFQRLLISKLYPGESIGQTSDISSPELMGVGSLLKKYTALLCTHIGDILPVAASIASTSWRHFAEVAYIVEGDFTGVLLPELVVSIVLLLSKNAGLMQEAGAVPLLGGLLEHLDRFNHLAPGKERDDHEELAWPGIMESFFTGQNCRNNEEVTLIRKADLENHNKDGGFWTVIDGKVYDIKDFQTQSLTGNSILAQFAGEDPVVALEAALQFEDTRESMHAFCVGQYLEPDQEIVTIPDLGSLSSPLIDTERNLGLLLGLHASYLAMSTPLSPVEIECAKWLQSSIFSGGLQTSQIHYSYNEEKDEDHCSSPGGTPASKSRLCSHRRALGDHSQAFLQAIADNNIQDHNVKDFLCQIERYCRQCHLTTPIMFPPEHPVEEVGRLLLCCLLKHEDLGHVALSLVHAGALGIEQVKHRTLPKSVVDVCRVVYQAKCSLIKTHQEQGRSYKEVCAPVIERLRFLFNELRPAVCNDLSIMSKFKLLSSLPRWRRIAQKIIRERRKKRVPKKPESTDDEEKIGNEESDLEEACILPHSPINVDKRPIAIKSPKDKWQPLLSTVTGVHKYKWLKQNVQGLYPQSPLLSTIAEFALKEEPVDVEKMRKCLLKQLERAEVRLEGIDTILKLASKNFLLPSVQYAMFCGWQRLIPEGIDIGEPLTDCLKDVDLIPPFNRMLLEVTFGKLYAWAVQNIRNVLMDASAKFKELGIQPVPLQTITNENPSGPSLGTIPQARFLLVMLSMLTLQHGANNLDLLLNSGMLALTQTALRLIGPSCDNVEEDMNASAQGASATVLEETRKETAPVQLPVSGPELAAMMKIGTRVMRGVDWKWGDQDGPPPGLGRVIGELGEDGWIRVQWDTGSTNSYRMGKEGKYDLKLAELPAAAQPSAEDSDTEDDSEAEQTERNIHPTAMMFTSTINLLQTLCLSAGVHAEIMQSEATKTLCGLLRMLVESGTTDKTSSPNRLVYREQHRSWCTLGFVRSIALTPQVCGALSSPQWITLLMKVVEGHAPFTATSLQRQILAVHLLQAVLPSWDKTERARDMKCLVEKLFDFLGSLLTTCSSDVPLLRESTLRRRRVRPQASLTATHSSTLAEEVVALLRTLHSLTQWNGLINKYINSQLRSITHSFVGRPSEGAQLEDYFPDSENPEVGGLMAVLAVIGGIDGRLRLGGQVMHDEFGEGTVTRITPKGKITVQFSDMRTCRVCPLNQLKPLPAVAFNVNNLPFTEPMLSVWAQLVNLAGSKLEKHKIKKSTKQAFAGQVDLDLLRCQQLKLYILKAGRALLSHQDKLRQILSQPAVQETGTVHTDDGAVVSPDLGDMSPEGPQPPMILLQQLLASATQPSPVKAIFDKQELEAAALAVCQCLAVESTHPSSPGFEDCSSSEATTPVAVQHIRPARVKRRKQSPVPALPIVVQLMEMGFSRRNIEFALKSLTGASGNASSLPGVEALVGWLLDHSDIQVTELSDADTVSDEYSDEEVVEDVDDAAYSMSTGAVVTESQTYKKRADFLSNDDYAVYVRENIQVGMMVRCCRAYEEVCEGDVGKVIKLDRDGLHDLNVQCDWQQKGGTYWVRYIHVELIGYPPPSSSSHIKIGDKVRVKASVTTPKYKWGSVTHQSVGVVKAFSANGKDIIVDFPQQSHWTGLLSEMELVPSIHPGVTCDGCQMFPINGSRFKCRNCDDFDFCETCFKTKKHNTRHTFGRINEPGQSAVFCGRSGKQLKRCHSSQPGMLLDSWSRMVKSLNVSSSVNQASRLIDGSEPCWQSSGSQGKHWIRLEIFPDVLVHRLKMIVDPADSSYMPSLVVVSGGNSLNNLIELKTININPSDTTVPLLNDCTEYHRYIEIAIKQCRSSGIDCKIHGLILLGRIRAEEEDLAAVPFLASDNEEEEDEKGNSGSLIRKKAAGLESAATIRTKVFVWGLNDKDQLGGLKGSKIKVPSFSETLSALNVVQVAGGSKSLFAVTVEGKVYACGEATNGRLGLGISSGTVPIPRQITALSSYVVKKVAVHSGGRHATALTVDGKVFSWGEGDDGKLGHFSRMNCDKPRLIEALKTKRIRDIACGSSHSAALTSSGELYTWGLGEYGRLGHGDNTTQLKPKMVKVLLGHRVIQVACGSRDAQTLALTDEGLVFSWGDGDFGKLGRGGSEGCNIPQNIERLNGQGVCQIECGAQFSLALTKSGVVWTWGKGDYFRLGHGSDVHVRKPQVVEGLRGKKIVHVAVGALHCLAVTDSGQVYAWGDNDHGQQGNGTTTVNRKPTLVQGLEGQKITRVACGSSHSVAWTTVDVATPSVHEPVLFQTARDPLGASYLGVPSDADSSAASNKISGASNSKPNRPSLAKILLSLDGNLAKQQALSHILTALQIMYARDAVVGALMPAAMIAPVECPSFSSAAPSDASAMASPMNGEECMLAVDIEDRLSPNPWQEKREIVSSEDAVTPSAVTPSAPSASARPFIPVTDDLGAASIIAETMTKTKEDVESQNKAAGPEPQALDEFTSLLIADDTRVVVDLLKLSVCSRAGDRGRDVLSAVLSGMGTAYPQVADMLLELCVTELEDVATDSQSGRLSSQPVVVESSHPYTDDTSTSGTVKIPGAEGLRVEFDRQCSTERRHDPLTVMDGVNRIVSVRSGREWSDWSSELRIPGDELKWKFISDGSVNGWGWRFTVYPIMPAAGPKELLSDRCVLSCPSMDLVTCLLDFRLNLASNRSIVPRLAASLAACAQLSALAASHRMWALQRLRKLLTTEFGQSININRLLGENDGETRALSFTGSALAALVKGLPEALQRQFEYEDPIVRGGKQLLHSPFFKVLVALACDLELDTLPCCAETHKWAWFRRYCMASRVAVALDKRTPLPRLFLDEVAKKIRELMADSENMDVLHESHDIFKREQDEQLVQWMNRRPDDWTLSAGGSGTIYGWGHNHRGQLGGIEGAKVKVPTPCEALATLRPVQLIGGEQTLFAVTADGKLYATGYGAGGRLGIGGTESVSTPTLLESIQHVFIKKVAVNSGGKHCLALSSEGEVYSWGEAEDGKLGHGNRSPCDRPRVIESLRGIEVVDVAAGGAHSACVTAAGDLYTWGKGRYGRLGHSDSEDQLKPKLVEALQGHRVVDIACGSGDAQTLCLTDDDTVWSWGDGDYGKLGRGGSDGCKVPMKIDSLTGLGVVKVECGSQFSVALTKSGAVYTWGKGDYHRLGHGSDDHVRRPRQVQGLQGKKVIAIATGSLHCVCCTEDGEVYTWGDNDEGQLGDGTTNAIQRPRLVAALQGKKVNRVACGSAHTLAWSTSKPASAGKLPAQVPMEYNHLQEIPIIALRNRLLLLHHLSELFCPCIPMFDLEGSLDETGLGPSVGFDTLRGILISQGKEAAFRKVVQATMVRDRQHGPVVELNRIQVKRSRSKGGLAGPDGTKSVFGQMCAKMSSFGPDSLLLPHRVWKVKFVGESVDDCGGGYSESIAEICEELQNGLTPLLIVTPNGRDESGANRDCYLLSPAARAPVHSSMFRFLGVLLGIAIRTGSPLSLNLAEPVWKQLAGMSLTIADLSEVDKDFIPGLMYIRDNEATSEEFEAMSLPFTVPSASGQDIQLSSKHTHITLDNRAEYVRLAINYRLHEFDEQVAAVREGMARVVPVPLLSLFTGYELETMVCGSPDIPLHLLKSVATYKGIEPSASLIQWFWEVMESFSNTERSLFLRFVWGRTRLPRTIADFRGRDFVIQVLDKYNPPDHFLPESYTCFFLLKLPRYSCKQVLEEKLKYAIHFCKSIDTDDYARIALTGEPAADDSSDDSDNEDVDSFASDSTQDYLTGH.

Residues 50–88 (TESTQNGELPPRKDDSVEPSGTKKEDLNDKEKKDEEETP) are disordered. The span at 59–84 (PPRKDDSVEPSGTKKEDLNDKEKKDE) shows a compositional bias: basic and acidic residues. At T272 the chain carries Phosphothreonine. The RCC1 1-1 repeat unit spans residues 415–461 (PTSHKGSLQEVIGWGLIGWKYYANVIGPIQCEGLANLGVTQIACAEK). One copy of the RCC1 1-2 repeat lies at 462–512 (RFLILSRNGRVYTQAYNSDTLAPQLVQGLASRNIVKIAAHSDGHHYLALAA). The RCC1 1-3 repeat unit spans residues 513-568 (TGEVYSWGCGDGGRLGHGDTVPLEEPKVISAFSGKQAGKHVVHIACGSTYSAAITA). The RCC1 1-4 repeat unit spans residues 569 to 620 (EGELYTWGRGNYGRLGHGSSEDEAIPMLVAGLKGLKVIDVACGSGDAQTLAV). The RCC1 1-5 repeat unit spans residues 623–674 (NGQVWSWGDGDYGKLGRGGSDGCKTPKLIEKLQDLDVVKVRCGSQFSIALTK). T647 is subject to Phosphothreonine. The RCC1 1-6 repeat unit spans residues 675–726 (DGQVYSWGKGDNQRLGHGTEEHVRYPKLLEGLQGKKVIDVAAGSTHCLALTE). An RCC1 1-7 repeat occupies 728–778 (SEVHSWGSNDQCQHFDTLRVTKPEPAALPGLDTKHIVGIACGPAQSFAWSS). A coiled-coil region spans residues 948–980 (LHAAITAEIQDIEAKKEAQKEKEIDEQEANAST). Residues 1207–1283 (VTLIRKADLE…MHAFCVGQYL (77 aa)) enclose the Cytochrome b5 heme-binding domain. The segment at 1555–1575 (RKKRVPKKPESTDDEEKIGNE) is disordered. The span at 1566–1575 (TDDEEKIGNE) shows a compositional bias: acidic residues. S1577 is subject to Phosphoserine. Residues 1859–1932 (SGPELAAMMK…KYDLKLAELP (74 aa)) enclose the MIB/HERC2 domain. Residues 1933-1958 (AAAQPSAEDSDTEDDSEAEQTERNIH) are disordered. Residues 1940-1951 (EDSDTEDDSEAE) are compositionally biased toward acidic residues. Phosphoserine is present on S1942. Residue T1944 is modified to Phosphothreonine. S2454 bears the Phosphoserine mark. Residues 2554-2630 (RADFLSNDDY…RYIHVELIGY (77 aa)) form the CPH domain. Residues 2703–2755 (HPGVTCDGCQMFPINGSRFKCRNCDDFDFCETCFKTKKHNTRHTFGRINEPGQ) form a ZZ-type zinc finger. Residues C2708, C2711, C2723, C2726, C2732, C2735, H2741, and H2745 each coordinate Zn(2+). One can recognise a DOC domain in the interval 2759–2936 (FCGRSGKQLK…ASDNEEEEDE (178 aa)). Position 2928 is a phosphoserine (S2928). The stretch at 2958–3009 (RTKVFVWGLNDKDQLGGLKGSKIKVPSFSETLSALNVVQVAGGSKSLFAVTV) is one RCC1 2-1 repeat. One copy of the RCC1 2-2 repeat lies at 3010-3064 (EGKVYACGEATNGRLGLGISSGTVPIPRQITALSSYVVKKVAVHSGGRHATALTV). The RCC1 2-3 repeat unit spans residues 3065 to 3116 (DGKVFSWGEGDDGKLGHFSRMNCDKPRLIEALKTKRIRDIACGSSHSAALTS). One copy of the RCC1 2-4 repeat lies at 3118–3168 (GELYTWGLGEYGRLGHGDNTTQLKPKMVKVLLGHRVIQVACGSRDAQTLAL). Residues 3171-3222 (EGLVFSWGDGDFGKLGRGGSEGCNIPQNIERLNGQGVCQIECGAQFSLALTK) form an RCC1 2-5 repeat. Residues 3224–3274 (GVVWTWGKGDYFRLGHGSDVHVRKPQVVEGLRGKKIVHVAVGALHCLAVTD) form an RCC1 2-6 repeat. The stretch at 3275 to 3326 (SGQVYAWGDNDHGQQGNGTTTVNRKPTLVQGLEGQKITRVACGSSHSVAWTT) is one RCC1 2-7 repeat. Composition is skewed to polar residues over residues 3602–3611 (SQSGRLSSQP) and 3618–3629 (HPYTDDTSTSGT). Positions 3602–3629 (SQSGRLSSQPVVVESSHPYTDDTSTSGT) are disordered. The RCC1 3-1 repeat unit spans residues 3951-4002 (SGTIYGWGHNHRGQLGGIEGAKVKVPTPCEALATLRPVQLIGGEQTLFAVTA). One copy of the RCC1 3-2 repeat lies at 4004 to 4056 (GKLYATGYGAGGRLGIGGTESVSTPTLLESIQHVFIKKVAVNSGGKHCLALSS). One copy of the RCC1 3-3 repeat lies at 4058 to 4108 (GEVYSWGEAEDGKLGHGNRSPCDRPRVIESLRGIEVVDVAAGGAHSACVTA). The stretch at 4110–4162 (GDLYTWGKGRYGRLGHSDSEDQLKPKLVEALQGHRVVDIACGSGDAQTLCLTD) is one RCC1 3-4 repeat. One copy of the RCC1 3-5 repeat lies at 4164–4214 (DTVWSWGDGDYGKLGRGGSDGCKVPMKIDSLTGLGVVKVECGSQFSVALTK). One copy of the RCC1 3-6 repeat lies at 4216 to 4266 (GAVYTWGKGDYHRLGHGSDDHVRRPRQVQGLQGKKVIAIATGSLHCVCCTE). Residues 4268–4318 (GEVYTWGDNDEGQLGDGTTNAIQRPRLVAALQGKKVNRVACGSAHTLAWST) form an RCC1 3-7 repeat. In terms of domain architecture, HECT spans 4457–4794 (DSLLLPHRVW…IHFCKSIDTD (338 aa)). Residue C4762 is the Glycyl thioester intermediate of the active site. The interval 4804–4834 (EPAADDSSDDSDNEDVDSFASDSTQDYLTGH) is disordered. Residues 4806–4820 (AADDSSDDSDNEDVD) show a composition bias toward acidic residues. Residues S4810, S4811, and S4814 each carry the phosphoserine modification. The segment covering 4823 to 4834 (ASDSTQDYLTGH) has biased composition (polar residues). T4827 carries the post-translational modification Phosphothreonine.

As to quaternary structure, interacts (when phosphorylated at Thr-4827 and sumoylated) with RNF8 (via FHA domain); this interaction increases after ionizing radiation (IR) treatment. Interacts with XPA. Interacts with NEURL4. Via its interaction with NEURL4, may indirectly interact with CCP110 and CEP97. Post-translationally, phosphorylation at Thr-4827 is required for interaction with RNF8. In terms of processing, sumoylated with SUMO1 by PIAS4 in response to double-strand breaks (DSBs), promoting the interaction with RNF8.

The protein localises to the cytoplasm. Its subcellular location is the cytoskeleton. It localises to the microtubule organizing center. It is found in the centrosome. The protein resides in the centriole. The protein localises to the nucleus. It carries out the reaction S-ubiquitinyl-[E2 ubiquitin-conjugating enzyme]-L-cysteine + [acceptor protein]-L-lysine = [E2 ubiquitin-conjugating enzyme]-L-cysteine + N(6)-ubiquitinyl-[acceptor protein]-L-lysine.. It functions in the pathway protein modification; protein ubiquitination. E3 ubiquitin-protein ligase that regulates ubiquitin-dependent retention of repair proteins on damaged chromosomes. Recruited to sites of DNA damage in response to ionizing radiation (IR) and facilitates the assembly of UBE2N and RNF8 promoting DNA damage-induced formation of 'Lys-63'-linked ubiquitin chains. Acts as a mediator of binding specificity between UBE2N and RNF8. Involved in the maintenance of RNF168 levels. E3 ubiquitin-protein ligase that promotes the ubiquitination and proteasomal degradation of XPA which influences the circadian oscillation of DNA excision repair activity. By controlling the steady-state expression of the IGF1R receptor, indirectly regulates the insulin-like growth factor receptor signaling pathway. Also modulates iron metabolism by regulating the basal turnover of FBXL5. In Homo sapiens (Human), this protein is E3 ubiquitin-protein ligase HERC2.